Consider the following 254-residue polypeptide: Protein U52 (254 aa).

This sequence belongs to the herpesviridae UL79 family.

The chain is Protein U52 (U52) from Homo sapiens (Human).